Reading from the N-terminus, the 261-residue chain is Kallikrein 1-related peptidase b9 (261 aa).

The signal sequence occupies residues 1-18 (MRFLILFLALSLGGIDAA). Positions 19–24 (PPVHSR) are cleaved as a propeptide — activation peptide. Residues 25–258 (IVGGFKCEKN…FTSWIKDTMA (234 aa)) form the Peptidase S1 domain. 5 cysteine pairs are disulfide-bonded: Cys-31–Cys-173, Cys-50–Cys-66, Cys-152–Cys-219, Cys-184–Cys-198, and Cys-209–Cys-234. Catalysis depends on His-65, which acts as the Charge relay system. Asn-102 carries N-linked (GlcNAc...) asparagine glycosylation. Asp-120 (charge relay system) is an active-site residue. The active-site Charge relay system is the Ser-213.

It belongs to the peptidase S1 family. Kallikrein subfamily.

The enzyme catalyses Preferential cleavage of Arg-|-Xaa bonds in small molecule substrates. Highly selective action to release kallidin (lysyl-bradykinin) from kininogen involves hydrolysis of Met-|-Xaa or Leu-|-Xaa.. Functionally, glandular kallikreins cleave Met-Lys and Arg-Ser bonds in kininogen to release Lys-bradykinin. In Mus musculus (Mouse), this protein is Kallikrein 1-related peptidase b9 (Klk1b9).